Here is a 211-residue protein sequence, read N- to C-terminus: Prolactin (211 aa).

The signal sequence occupies residues 1 to 24 (MTHRRTKLFMMAAVVSYVMTSCGA). 2 disulfide bridges follow: Cys-70–Cys-184 and Cys-201–Cys-211.

The protein belongs to the somatotropin/prolactin family.

The protein resides in the secreted. This chain is Prolactin (prl), found in Paralichthys olivaceus (Bastard halibut).